Here is a 198-residue protein sequence, read N- to C-terminus: Phosphoheptose isomerase (198 aa).

The 160-residue stretch at 36–195 (AIEVYQNGNK…EEAIFRNKFV (160 aa)) folds into the SIS domain. 51 to 53 (NGG) lines the substrate pocket. Residues His60 and Glu64 each contribute to the Zn(2+) site. Substrate-binding positions include Glu64, 93 to 94 (ND), 119 to 121 (STS), Ser124, and Gln171. Zn(2+) is bound by residues Gln171 and His179.

The protein belongs to the SIS family. GmhA subfamily. Requires Zn(2+) as cofactor.

It is found in the cytoplasm. The catalysed reaction is 2 D-sedoheptulose 7-phosphate = D-glycero-alpha-D-manno-heptose 7-phosphate + D-glycero-beta-D-manno-heptose 7-phosphate. The protein operates within carbohydrate biosynthesis; D-glycero-D-manno-heptose 7-phosphate biosynthesis; D-glycero-alpha-D-manno-heptose 7-phosphate and D-glycero-beta-D-manno-heptose 7-phosphate from sedoheptulose 7-phosphate: step 1/1. It functions in the pathway cell surface structure biogenesis; S-layer biogenesis. Functionally, catalyzes the isomerization of sedoheptulose 7-phosphate in D-glycero-D-manno-heptose 7-phosphate. The polypeptide is Phosphoheptose isomerase (Aneurinibacillus thermoaerophilus).